The chain runs to 157 residues: Peptide methionine sulfoxide reductase MsrA (157 aa).

Cys-10 is an active-site residue.

It belongs to the MsrA Met sulfoxide reductase family.

The enzyme catalyses L-methionyl-[protein] + [thioredoxin]-disulfide + H2O = L-methionyl-(S)-S-oxide-[protein] + [thioredoxin]-dithiol. It catalyses the reaction [thioredoxin]-disulfide + L-methionine + H2O = L-methionine (S)-S-oxide + [thioredoxin]-dithiol. Its function is as follows. Has an important function as a repair enzyme for proteins that have been inactivated by oxidation. Catalyzes the reversible oxidation-reduction of methionine sulfoxide in proteins to methionine. The protein is Peptide methionine sulfoxide reductase MsrA of Clostridium botulinum (strain Loch Maree / Type A3).